Reading from the N-terminus, the 291-residue chain is Flap endonuclease (291 aa).

Residues 82–116 (YKGNRDEKYAQRTEEEKALDEQFFEYLKDAFELCK) are helical arch. Lysine 83 lines the DNA pocket. Aspartate 130, aspartate 153, aspartate 155, and aspartate 201 together coordinate Mg(2+). The tract at residues 188–224 (DVEQFISLKAIMGDLGDNIRGVEGIGAKRGYNIIREF) is DNA-binding; H3TH. The 5'-3' exonuclease domain occupies 190-263 (EQFISLKAIM…FRNLILVDLP (74 aa)). Positions 209 and 212 each coordinate K(+).

Mg(2+) is required as a cofactor. The cofactor is K(+).

The catalysed reaction is Exonucleolytic cleavage in the 5'- to 3'-direction to yield nucleoside 5'-phosphates.. Inhibited by p-hydroxymercuribenzoate (PHMB). Catalyzes both the 5'-exonucleolytic and structure-specific endonucleolytic hydrolysis of DNA branched nucleic acid molecules and probably plays a role in viral genome replication. Active on flap (branched duplex DNA containing a free single-stranded 5'-end), 5'overhangs and pseudo-Y structures. The substrates require a free, single-stranded 5' end, with endonucleolytic hydrolysis occurring at the junction of double- and single-stranded DNA. This function may be used for example to trim such branched molecules generated by Okazaki fragments synthesis during replication. The protein is Flap endonuclease (D15) of Escherichia phage T5 (Enterobacteria phage T5).